Consider the following 66-residue polypeptide: Holin (66 aa).

Residues 1–29 (MMLDTATEAGKGTLAVTGVGIAVYSPYEI) lie on the Cytoplasmic side of the membrane. Residues 30 to 50 (ASLCAAVLTALYVGAQLITLL) traverse the membrane as a helical; Signal-anchor for type II membrane protein segment. Residues 51–66 (PKMLDSIAELRRRFKK) are Periplasmic-facing.

As to quaternary structure, homomultimer.

The protein localises to the host cell inner membrane. Accumulates harmlessly in the cytoplasmic membrane until it reaches a critical concentration that triggers the formation of nanometer-scale pores (pinholes) causing host cell membrane depolarization and endolysin refolding and release into the periplasmic space. Once the pinholin has permeabilized the host cell membrane, the SAR-endolysin is released into the periplasm and breaks down the peptidoglycan layer. Determines the precise timing of host cell lysis. Participates with the SAR-endolysin and the U-spanin protein in the sequential events which lead to the programmed host cell lysis releasing the mature viral particles from the host cell. This chain is Holin, found in Pseudomonas phage phiKMV.